Consider the following 327-residue polypeptide: Pantothenate kinase (327 aa).

An ATP-binding site is contributed by glycine 105–serine 112.

The protein belongs to the prokaryotic pantothenate kinase family.

Its subcellular location is the cytoplasm. The catalysed reaction is (R)-pantothenate + ATP = (R)-4'-phosphopantothenate + ADP + H(+). It participates in cofactor biosynthesis; coenzyme A biosynthesis; CoA from (R)-pantothenate: step 1/5. This chain is Pantothenate kinase, found in Cutibacterium acnes (strain DSM 16379 / KPA171202) (Propionibacterium acnes).